A 122-amino-acid polypeptide reads, in one-letter code: Small ribosomal subunit protein bS6 (122 aa).

Belongs to the bacterial ribosomal protein bS6 family.

Functionally, binds together with bS18 to 16S ribosomal RNA. This Methylibium petroleiphilum (strain ATCC BAA-1232 / LMG 22953 / PM1) protein is Small ribosomal subunit protein bS6.